The sequence spans 37 residues: Large ribosomal subunit protein bL36A (37 aa).

Belongs to the bacterial ribosomal protein bL36 family.

This Haemophilus ducreyi (strain 35000HP / ATCC 700724) protein is Large ribosomal subunit protein bL36A.